The primary structure comprises 669 residues: Probable serine/threonine-protein kinase DDB_G0291918 (669 aa).

One can recognise a Protein kinase domain in the interval 13 to 360; sequence YNNIKELGRG…LKETLNHPFL (348 aa). ATP is bound by residues 19–27 and lysine 42; that span reads LGRGVSGVV. Catalysis depends on aspartate 141, which acts as the Proton acceptor. Low complexity predominate over residues 396-405; that stretch reads QNQQQQQQQQ. Disordered regions lie at residues 396–518 and 530–550; these read QNQQ…APTF and FPKL…MNWR. Positions 406–418 are enriched in polar residues; that stretch reads KSFSTSSLPQVNH. Low complexity-rich tracts occupy residues 419–449 and 457–494; these read NNDT…NNNN and QSNN…SSTD.

This sequence belongs to the protein kinase superfamily. Ser/Thr protein kinase family.

It carries out the reaction L-seryl-[protein] + ATP = O-phospho-L-seryl-[protein] + ADP + H(+). The enzyme catalyses L-threonyl-[protein] + ATP = O-phospho-L-threonyl-[protein] + ADP + H(+). This is Probable serine/threonine-protein kinase DDB_G0291918 from Dictyostelium discoideum (Social amoeba).